A 184-amino-acid polypeptide reads, in one-letter code: MNKGNLIENYAVALFNNAMVDNIQDKIFEEITSINRIITDNFDIREFLFSPIVNKNDKINAVNSLAKNIKISTIVQNFLLLLVKNSRIAILSNIVDAYNTLLYESKNIKIVQVISANKLQPKEQEWIKSRIEKELNQKTEILFDIDNTIIGGIVIKYDSMLQDYSIKGSLEKITKALKTVNIAV.

It belongs to the ATPase delta chain family. In terms of assembly, F-type ATPases have 2 components, F(1) - the catalytic core - and F(0) - the membrane proton channel. F(1) has five subunits: alpha(3), beta(3), gamma(1), delta(1), epsilon(1). F(0) has three main subunits: a(1), b(2) and c(10-14). The alpha and beta chains form an alternating ring which encloses part of the gamma chain. F(1) is attached to F(0) by a central stalk formed by the gamma and epsilon chains, while a peripheral stalk is formed by the delta and b chains.

Its subcellular location is the cell inner membrane. F(1)F(0) ATP synthase produces ATP from ADP in the presence of a proton or sodium gradient. F-type ATPases consist of two structural domains, F(1) containing the extramembraneous catalytic core and F(0) containing the membrane proton channel, linked together by a central stalk and a peripheral stalk. During catalysis, ATP synthesis in the catalytic domain of F(1) is coupled via a rotary mechanism of the central stalk subunits to proton translocation. In terms of biological role, this protein is part of the stalk that links CF(0) to CF(1). It either transmits conformational changes from CF(0) to CF(1) or is implicated in proton conduction. This Rickettsia peacockii (strain Rustic) protein is ATP synthase subunit delta.